A 51-amino-acid chain; its full sequence is Putative ribosomal protein eL39-like 5 (51 aa).

The protein belongs to the eukaryotic ribosomal protein eL39 family.

In Homo sapiens (Human), this protein is Putative ribosomal protein eL39-like 5 (RPL39P5).